The chain runs to 168 residues: uncharacterized protein (168 aa).

A helical transmembrane segment spans residues 5–24 (IAWASACLLLVMLTGFFTIG).

It is found in the membrane. This is an uncharacterized protein from Bacillus subtilis (strain 168).